Reading from the N-terminus, the 502-residue chain is Probable cytosol aminopeptidase (502 aa).

Lysine 269 and aspartate 274 together coordinate Mn(2+). Lysine 281 is a catalytic residue. Mn(2+)-binding residues include aspartate 292, aspartate 351, and glutamate 353. Arginine 355 is an active-site residue.

This sequence belongs to the peptidase M17 family. The cofactor is Mn(2+).

It is found in the cytoplasm. It catalyses the reaction Release of an N-terminal amino acid, Xaa-|-Yaa-, in which Xaa is preferably Leu, but may be other amino acids including Pro although not Arg or Lys, and Yaa may be Pro. Amino acid amides and methyl esters are also readily hydrolyzed, but rates on arylamides are exceedingly low.. The enzyme catalyses Release of an N-terminal amino acid, preferentially leucine, but not glutamic or aspartic acids.. Functionally, presumably involved in the processing and regular turnover of intracellular proteins. Catalyzes the removal of unsubstituted N-terminal amino acids from various peptides. The sequence is that of Probable cytosol aminopeptidase from Shewanella piezotolerans (strain WP3 / JCM 13877).